We begin with the raw amino-acid sequence, 214 residues long: Intermembrane phospholipid transport system binding protein MlaC (214 aa).

Residues 1-28 (MNLIQLKKWFTILTFVLTAFLVTRTAIA) form the signal peptide.

Belongs to the MlaC/ttg2D family.

The protein resides in the periplasm. Its function is as follows. Involved in a phospholipid transport pathway that maintains lipid asymmetry in the outer membrane by retrograde trafficking of phospholipids from the outer membrane to the inner membrane. May transfer phospholipid across the periplasmic space and deliver it to the MlaFEDB complex at the inner membrane. This is Intermembrane phospholipid transport system binding protein MlaC from Haemophilus influenzae (strain ATCC 51907 / DSM 11121 / KW20 / Rd).